The chain runs to 220 residues: Apoptosis regulator BALF1 (220 aa).

The protein belongs to the Epstein-Barr virus BALF1 family. In terms of assembly, interacts with BHRF1; this interaction modulates BHRF1 activity. Interacts with host BAX and BAK1.

It localises to the host cytoplasm. Functionally, modulates the antiapoptotic activity of the viral protein BHRF1. May also play an active part in oncogenesis in Burkitt's lymphomy and nasopharyngeal carcinoma. The polypeptide is Apoptosis regulator BALF1 (Homo sapiens (Human)).